The sequence spans 120 residues: V-type proton ATPase subunit F (120 aa).

Belongs to the V-ATPase F subunit family. As to quaternary structure, V-ATPase is a heteromultimeric enzyme composed of a peripheral catalytic V1 complex (components A to H) attached to an integral membrane V0 proton pore complex (components: a, c, c', c'' and d).

In terms of biological role, subunit of the peripheral V1 complex of vacuolar ATPase essential for assembly or catalytic function. V-ATPase is responsible for acidifying a variety of intracellular compartments in eukaryotic cells. The sequence is that of V-type proton ATPase subunit F (vatF) from Dictyostelium discoideum (Social amoeba).